Reading from the N-terminus, the 174-residue chain is Peptide deformylase (174 aa).

Residues Cys96 and His138 each contribute to the Fe cation site. The active site involves Glu139. Residue His142 coordinates Fe cation.

The protein belongs to the polypeptide deformylase family. Fe(2+) is required as a cofactor.

The enzyme catalyses N-terminal N-formyl-L-methionyl-[peptide] + H2O = N-terminal L-methionyl-[peptide] + formate. In terms of biological role, removes the formyl group from the N-terminal Met of newly synthesized proteins. Requires at least a dipeptide for an efficient rate of reaction. N-terminal L-methionine is a prerequisite for activity but the enzyme has broad specificity at other positions. The polypeptide is Peptide deformylase (Helicobacter pylori (strain J99 / ATCC 700824) (Campylobacter pylori J99)).